Reading from the N-terminus, the 2003-residue chain is Neurogenic locus notch homolog protein 4 (2003 aa).

The N-terminal stretch at Met-1–Pro-23 is a signal peptide. EGF-like domains lie at Arg-24 to Gln-63, Phe-64 to Gln-115, Leu-118 to Gln-155, and Leu-156 to Glu-192. Over Arg-24–Trp-1447 the chain is Extracellular. Disulfide bonds link Cys-28/Cys-41, Cys-35/Cys-51, Cys-53/Cys-62, Cys-68/Cys-80, Cys-74/Cys-103, Cys-105/Cys-114, Cys-122/Cys-133, Cys-127/Cys-143, Cys-145/Cys-154, Cys-160/Cys-171, Cys-165/Cys-180, Cys-182/Cys-191, Cys-198/Cys-211, Cys-205/Cys-220, Cys-222/Cys-231, Cys-238/Cys-249, Cys-243/Cys-262, Cys-264/Cys-273, Cys-280/Cys-291, Cys-285/Cys-300, Cys-302/Cys-311, Cys-318/Cys-332, Cys-326/Cys-341, Cys-343/Cys-352, Cys-359/Cys-370, Cys-364/Cys-379, Cys-381/Cys-390, Cys-396/Cys-407, Cys-401/Cys-418, Cys-420/Cys-429, Cys-436/Cys-452, Cys-446/Cys-461, Cys-463/Cys-472, Cys-479/Cys-490, Cys-484/Cys-499, Cys-501/Cys-510, Cys-517/Cys-528, Cys-522/Cys-537, Cys-539/Cys-548, Cys-555/Cys-566, Cys-560/Cys-575, Cys-577/Cys-586, Cys-593/Cys-604, Cys-598/Cys-613, Cys-615/Cys-624, Cys-629/Cys-640, Cys-634/Cys-649, and Cys-651/Cys-658. The region spanning Asp-194–Glu-232 is the EGF-like 5; calcium-binding domain. The EGF-like 6 domain maps to Arg-234 to Glu-274. One can recognise an EGF-like 7; calcium-binding domain in the interval Asn-276 to Ser-312. The EGF-like 8; calcium-binding domain occupies Asp-314–Glu-353. Residues Asn-355–His-391 enclose the EGF-like 9; calcium-binding domain. The EGF-like 10 domain maps to Leu-392 to His-430. The 42-residue stretch at Asp-432–Glu-473 folds into the EGF-like 11; calcium-binding domain. An EGF-like 12; calcium-binding domain is found at Asp-475 to Glu-511. The EGF-like 13; calcium-binding domain occupies Glu-513 to Glu-549. The region spanning Asp-551–Gln-587 is the EGF-like 14; calcium-binding domain. The 37-residue stretch at Glu-589 to Glu-625 folds into the EGF-like 15; calcium-binding domain. EGF-like domains are found at residues Val-626–Ala-659, Pro-661–Glu-689, Glu-691–Ser-727, Glu-729–Gln-765, Ser-767–Glu-803, Leu-806–Gln-842, Leu-844–Asn-880, Pro-882–Gln-928, His-930–Ser-966, Glu-968–Glu-1004, Asp-1006–Glu-1044, Glu-1046–Ser-1085, Arg-1087–Leu-1126, and Ala-1130–Gln-1171. N-linked (GlcNAc...) asparagine glycosylation is present at Asn-664. 47 cysteine pairs are disulfide-bonded: Cys-665–Cys-672, Cys-667–Cys-677, Cys-679–Cys-688, Cys-695–Cys-706, Cys-700–Cys-715, Cys-717–Cys-726, Cys-733–Cys-744, Cys-738–Cys-753, Cys-755–Cys-764, Cys-771–Cys-782, Cys-776–Cys-791, Cys-793–Cys-802, Cys-810–Cys-821, Cys-815–Cys-830, Cys-832–Cys-841, Cys-848–Cys-859, Cys-853–Cys-868, Cys-870–Cys-879, Cys-886–Cys-907, Cys-901–Cys-916, Cys-918–Cys-927, Cys-934–Cys-945, Cys-939–Cys-954, Cys-956–Cys-965, Cys-972–Cys-983, Cys-977–Cys-992, Cys-994–Cys-1003, Cys-1010–Cys-1023, Cys-1015–Cys-1032, Cys-1034–Cys-1043, Cys-1050–Cys-1061, Cys-1055–Cys-1073, Cys-1075–Cys-1084, Cys-1091–Cys-1102, Cys-1096–Cys-1114, Cys-1116–Cys-1125, Cys-1134–Cys-1146, Cys-1140–Cys-1159, Cys-1161–Cys-1170, Cys-1178–Cys-1191, Cys-1187–Cys-1203, Cys-1214–Cys-1238, Cys-1220–Cys-1233, Cys-1229–Cys-1245, Cys-1251–Cys-1277, Cys-1259–Cys-1272, and Cys-1268–Cys-1284. Asn-714 carries N-linked (GlcNAc...) asparagine glycosylation. Asn-964 carries an N-linked (GlcNAc...) asparagine glycan. Residue Asn-1143 is glycosylated (N-linked (GlcNAc...) asparagine). 3 LNR repeats span residues Cys-1170 to Gly-1213, Cys-1214 to Ala-1250, and Cys-1251 to Gly-1294. The disordered stretch occupies residues Ala-1347–Gly-1371. The helical transmembrane segment at Pro-1448–Leu-1468 threads the bilayer. Residues Gln-1469–Lys-2003 are Cytoplasmic-facing. Positions Pro-1485–Ser-1508 are disordered. Over residues Arg-1489–Pro-1502 the composition is skewed to basic residues. ANK repeat units follow at residues Thr-1633 to Arg-1665, Ala-1666 to Thr-1698, Asp-1700 to Lys-1732, Trp-1733 to Asn-1765, and Arg-1766 to Gln-1798. 2 disordered regions span residues Leu-1900–Pro-1927 and Pro-1968–Lys-2003.

This sequence belongs to the NOTCH family. Heterodimer of a C-terminal fragment N(TM) and a N-terminal fragment N(EC) which are probably linked by disulfide bonds. Interacts with MAML1, MAML2 and MAML3 which act as transcriptional coactivators for NOTCH4. As to quaternary structure, (Microbial infection) Interacts with Epstein-Barr virus (EBV) RK-BARF0. In terms of processing, synthesized in the endoplasmic reticulum as an inactive form which is proteolytically cleaved by a furin-like convertase in the trans-Golgi network before it reaches the plasma membrane to yield an active, ligand-accessible form. Cleavage results in a C-terminal fragment N(TM) and a N-terminal fragment N(EC). Following ligand binding, it is cleaved by TNF-alpha converting enzyme (TACE) to yield a membrane-associated intermediate fragment called notch extracellular truncation (NEXT). This fragment is then cleaved by presenilin dependent gamma-secretase to release a notch-derived peptide containing the intracellular domain (NICD) from the membrane. Post-translationally, phosphorylated. In terms of tissue distribution, highly expressed in the heart, moderately in the lung and placenta and at low levels in the liver, skeletal muscle, kidney, pancreas, spleen, lymph node, thymus, bone marrow and fetal liver. No expression was seen in adult brain or peripheral blood leukocytes.

The protein localises to the cell membrane. The protein resides in the nucleus. In terms of biological role, functions as a receptor for membrane-bound ligands Jagged1, Jagged2 and Delta1 to regulate cell-fate determination. Upon ligand activation through the released notch intracellular domain (NICD) it forms a transcriptional activator complex with RBPJ/RBPSUH and activates genes of the enhancer of split locus. Affects the implementation of differentiation, proliferation and apoptotic programs. May regulate branching morphogenesis in the developing vascular system. The sequence is that of Neurogenic locus notch homolog protein 4 from Homo sapiens (Human).